Here is a 336-residue protein sequence, read N- to C-terminus: MKAAVVTKDHHVDVTYKTLRSLKHGEALLKMECCGVCHTDLHVKNGDFGDKTGVILGHEGIGVVAEVGPGVTSLKPGDRASVAWFYEGCGHCEYCNSGNETLCRSVKNAGYSVDGGMAEECIVVADYAVKVPDGLDSAAASSITCAGVTTYKAVKLSKIRPGQWIAIYGLGGLGNLALQYAKNVFNAKVIAIDVNDEQLKLATEMGADLAINSHTEDAAKIVQEKTGGAHAAVVTAVAKAAFNSAVDAVRAGGRVVAVGLPPESMSLDIPRLVLDGIEVVGSLVGTRQDLTEAFQFAAEGKVVPKVALRPLADINTIFTEMEEGKIRGRMVIDFRH.

Residues Cys-37, His-58, Cys-89, Cys-92, Cys-95, Cys-103, and Cys-145 each contribute to the Zn(2+) site.

The protein belongs to the zinc-containing alcohol dehydrogenase family. The cofactor is Zn(2+).

The catalysed reaction is a primary alcohol + NAD(+) = an aldehyde + NADH + H(+). It catalyses the reaction a secondary alcohol + NAD(+) = a ketone + NADH + H(+). Functionally, preferred specificity is towards 1-propanol. This Escherichia coli (strain K12) protein is Alcohol dehydrogenase, propanol-preferring (adhP).